The chain runs to 470 residues: Carboxypeptidase Q (470 aa).

Residues 1-18 form the signal peptide; the sequence is MRSLFFLFIVHLLALGSG. The propeptide occupies 19-42; sequence KAVFKNGVSQRTFREIKEEIANYE. The N-linked (GlcNAc...) asparagine glycan is linked to Asn59. Residues His288 and Asp300 each contribute to the Zn(2+) site. Glu334 functions as the Nucleophile in the catalytic mechanism. Glu335 contacts Zn(2+). Asn351 carries an N-linked (GlcNAc...) asparagine glycan. Position 362 (Asp362) interacts with Zn(2+). N-linked (GlcNAc...) asparagine glycosylation is present at Asn394. Residue His432 participates in Zn(2+) binding.

Belongs to the peptidase M28 family. As to quaternary structure, homodimer. The monomeric form is inactive while the homodimer is active. N-glycosylated. The secreted form is modified by hybrid or complex type oligosaccharide chains.

It localises to the endoplasmic reticulum. It is found in the golgi apparatus. Its subcellular location is the lysosome. The protein resides in the secreted. In terms of biological role, carboxypeptidase that may play an important role in the hydrolysis of circulating peptides. Catalyzes the hydrolysis of dipeptides with unsubstituted terminals into amino acids. May play a role in the liberation of thyroxine hormone from its thyroglobulin (Tg) precursor. The chain is Carboxypeptidase Q (Cpq) from Mus musculus (Mouse).